A 465-amino-acid polypeptide reads, in one-letter code: Glutathione reductase (465 aa).

2 residues coordinate FAD: Ser16 and Gly17. Residue Ser16 coordinates glutathione. Arg23 serves as a coordination point for glutathione. Positions 42, 49, 50, and 58 each coordinate FAD. Cysteines 50 and 55 form a disulfide. A glutathione-binding site is contributed by Tyr108. Residue Gly124 participates in FAD binding. Residues Ala187, Ile190, Glu193, Arg210, Arg216, and Gly276 each coordinate NADP(+). FAD is bound at residue Asp318. Residue Leu324 coordinates NADP(+). Residue Thr326 coordinates FAD. Arg334 provides a ligand contact to glutathione. Val357 is a binding site for NADP(+). His454 is an FAD binding site. His454 acts as the Proton acceptor in catalysis.

This sequence belongs to the class-I pyridine nucleotide-disulfide oxidoreductase family. FAD is required as a cofactor.

It localises to the cytoplasm. It catalyses the reaction 2 glutathione + NADP(+) = glutathione disulfide + NADPH + H(+). Its function is as follows. Catalyzes the reduction of glutathione disulfide (GSSG) to reduced glutathione (GSH). Constitutes the major mechanism to maintain a high GSH:GSSG ratio in the cytosol. The amount of GSH may affect the determination of cell fate. This Dictyostelium discoideum (Social amoeba) protein is Glutathione reductase (gsr).